The chain runs to 131 residues: Phosphoribosyl-AMP cyclohydrolase (131 aa).

Position 90 (Asp90) interacts with Mg(2+). Position 91 (Cys91) interacts with Zn(2+). Residues Asp92 and Asp94 each contribute to the Mg(2+) site. The Zn(2+) site is built by Cys107 and Cys114.

This sequence belongs to the PRA-CH family. Homodimer. Mg(2+) is required as a cofactor. It depends on Zn(2+) as a cofactor.

It is found in the cytoplasm. The enzyme catalyses 1-(5-phospho-beta-D-ribosyl)-5'-AMP + H2O = 1-(5-phospho-beta-D-ribosyl)-5-[(5-phospho-beta-D-ribosylamino)methylideneamino]imidazole-4-carboxamide. It functions in the pathway amino-acid biosynthesis; L-histidine biosynthesis; L-histidine from 5-phospho-alpha-D-ribose 1-diphosphate: step 3/9. Functionally, catalyzes the hydrolysis of the adenine ring of phosphoribosyl-AMP. The chain is Phosphoribosyl-AMP cyclohydrolase from Hyphomonas neptunium (strain ATCC 15444).